The sequence spans 382 residues: tRNA(Ile)-lysidine synthase (382 aa).

50 to 55 lines the ATP pocket; the sequence is SGGRDS.

It belongs to the tRNA(Ile)-lysidine synthase family.

The protein resides in the cytoplasm. The catalysed reaction is cytidine(34) in tRNA(Ile2) + L-lysine + ATP = lysidine(34) in tRNA(Ile2) + AMP + diphosphate + H(+). In terms of biological role, ligates lysine onto the cytidine present at position 34 of the AUA codon-specific tRNA(Ile) that contains the anticodon CAU, in an ATP-dependent manner. Cytidine is converted to lysidine, thus changing the amino acid specificity of the tRNA from methionine to isoleucine. In Bifidobacterium animalis subsp. lactis (strain AD011), this protein is tRNA(Ile)-lysidine synthase.